The following is a 315-amino-acid chain: T cell receptor beta chain MC.7.G5 (315 aa).

An N-terminal signal peptide occupies residues 1-21 (MTIRLLCYMGFYFLGAGLMEA). One can recognise an Ig-like V-type domain in the interval 22 to 114 (DIYQTPRYLV…TSQYLCASSE (93 aa)). The segment at 22 to 114 (DIYQTPRYLV…TSQYLCASSE (93 aa)) is t cell receptor beta variable 25-1. Cysteine 42 and cysteine 110 are joined by a disulfide. A CDR1 region spans residues 46–50 (MGHDK). Residues 68 to 73 (SYGVNS) are CDR2. A glycan (N-linked (GlcNAc...) asparagine) is linked at asparagine 72. The segment at 110–127 (CASSEARGLAEFTDTQYF) is CDR3. Residues 122 to 136 (TDTQYFGPGTRLTVL) form a t cell receptor beta joining 2-3 region. The segment at 138–315 (DLKNVFPPEV…AMVKRKDSRG (178 aa)) is t cell receptor beta constant 2. Residues 145-254 (PEVAVFEPSE…WTQDRAKPVT (110 aa)) enclose the Ig-like C1-type domain. A disulfide bond links cysteine 167 and cysteine 232. The N-linked (GlcNAc...) asparagine glycan is linked to asparagine 206. Positions 267–281 (CGFTSESYQQGVLSA) are connecting peptide. The chain crosses the membrane as a helical span at residues 282–304 (TILYEILLGKATLYAVLVSALVL). Over 305 to 315 (MAMVKRKDSRG) the chain is Cytoplasmic.

Disulfide-linked heterodimer with TRAV38-2DV8*01J31*01C*01 alpha chain. The alpha-beta TR associates with the transmembrane signaling CD3 coreceptor proteins to form the TR-CD3 (TCR). The assembly of alpha-beta TR heterodimers with CD3 occurs in the endoplasmic reticulum where a single alpha-beta TR heterodimer associates with one CD3D-CD3E heterodimer, one CD3G-CD3E heterodimer and one CD247 homodimer forming a stable octameric structure. CD3D-CD3E and CD3G-CD3E heterodimers preferentially associate with TR alpha and TR beta chains (via TM domain), respectively. The association of the CD247 homodimer is the last step of TCR assembly in the endoplasmic reticulum and is required for transport to the cell surface. In terms of tissue distribution, expressed in MR1-restricted CD8-positive T cells.

It is found in the cell membrane. In terms of biological role, the beta chain of TRAV38-2DV8*01J31*01C*01/TRBV25-1*01J2S3*01C2*01 alpha-beta T cell receptor (TR) clonotype that displays pan-cancer cell recognition via the invariant MR1 molecule. On CD8-positive T cell clone MC.7.G5, likely recognizes tumor-specific or -associated metabolite(s) essential for cancer cell survival, triggering killing of many cancer cell types including lung, melanoma, leukemia, colon, breast, prostate, bone and ovarian cancer cells. Mediates cancer cell cytotoxicity in an HLA-independent manner. Has no reactivity to healthy cells even stressed or infected by bacteria. Antigen recognition initiates TR-CD3 clustering on the cell surface and intracellular activation of LCK that phosphorylates the ITAM motifs of CD3G, CD3D, CD3E and CD247 enabling the recruitment of ZAP70. In turn, ZAP70 phosphorylates LAT, which recruits numerous signaling molecules to form the LAT signalosome. The LAT signalosome propagates signal branching to three major signaling pathways, the calcium, the mitogen-activated protein kinase (MAPK) kinase and the nuclear factor NF-kappa-B (NF-kB) pathways, leading to the mobilization of transcription factors that are critical for gene expression and essential for T cell differentiation into effector/memory T cells. This chain is T cell receptor beta chain MC.7.G5, found in Homo sapiens (Human).